The primary structure comprises 287 residues: MPLLKLVFLGTGGAVPRADRMLPAIYLEDWLGHRILLDAGEGVQYRLFQIGVAPSSLTLVAVTHMHEDHVLGLPGLVITAKFLGGKVKLLGPRSAHGILSRLGVDVADGYDGGRLRVRCVEVCHTVDACGWLLEWDVGYKLDLKKVEGLPKWALTKLIRGEEVEVGGRVIRPEEVADPAHKRYRRLLYTGDTGPCPRMLKTVGEVDVLIHEATFADDVDPNKAHEEGHSTVADAVEAAKALRAGVLVLTHISARYTDKARHRQLAGRVPPPPHVYVPDDFDTLLVQL.

Zn(2+) contacts are provided by His64, His66, Asp68, His69, His124, Asp191, and His250. The active-site Proton acceptor is Asp68.

Belongs to the RNase Z family. As to quaternary structure, homodimer. Requires Zn(2+) as cofactor.

The catalysed reaction is Endonucleolytic cleavage of RNA, removing extra 3' nucleotides from tRNA precursor, generating 3' termini of tRNAs. A 3'-hydroxy group is left at the tRNA terminus and a 5'-phosphoryl group is left at the trailer molecule.. Its function is as follows. Zinc phosphodiesterase, which displays some tRNA 3'-processing endonuclease activity. Probably involved in tRNA maturation, by removing a 3'-trailer from precursor tRNA. The polypeptide is Ribonuclease Z (Pyrobaculum arsenaticum (strain DSM 13514 / JCM 11321 / PZ6)).